Consider the following 493-residue polypeptide: Betaine aldehyde dehydrogenase (493 aa).

Ser32, Ile33, and Asp99 together coordinate K(+). 156 to 158 (GAW) contacts NAD(+). The active-site Charge relay system is the Lys168. NAD(+) is bound by residues 182 to 185 (KPSE) and 235 to 238 (SVPT). K(+) is bound at residue Leu250. Glu256 acts as the Proton acceptor in catalysis. Residues Gly258, Cys290, and Glu390 each coordinate NAD(+). The active-site Nucleophile is the Cys290. Cys290 carries the cysteine sulfenic acid (-SOH) modification. Residues Lys460 and Gly463 each coordinate K(+). The active-site Charge relay system is the Glu467.

It belongs to the aldehyde dehydrogenase family. As to quaternary structure, dimer of dimers. The cofactor is K(+).

The enzyme catalyses betaine aldehyde + NAD(+) + H2O = glycine betaine + NADH + 2 H(+). It functions in the pathway amine and polyamine biosynthesis; betaine biosynthesis via choline pathway; betaine from betaine aldehyde: step 1/1. Functionally, involved in the biosynthesis of the osmoprotectant glycine betaine. Catalyzes the irreversible oxidation of betaine aldehyde to the corresponding acid. The polypeptide is Betaine aldehyde dehydrogenase (Agrobacterium fabrum (strain C58 / ATCC 33970) (Agrobacterium tumefaciens (strain C58))).